The following is a 588-amino-acid chain: Vesicular glutamate transporter 3 (588 aa).

At 1–76 (MPFNAFDTFK…CSCCGIPKRY (76 aa)) the chain is on the cytoplasmic side. Residues 77–97 (IIAVMSGLGFCISFGIRCNLG) form a helical membrane-spanning segment. The Vesicular portion of the chain corresponds to 98–130 (VAIVEMVNNSTVYVDGKPEIQTAQFNWDPETVG). A glycan (N-linked (GlcNAc...) asparagine) is linked at N106. A helical membrane pass occupies residues 131–151 (LIHGSFFWGYIVTQIPGGFIS). At 152–153 (NK) the chain is on the cytoplasmic side. The helical transmembrane segment at 154–174 (FAANRVFGAAIFLTSTLNMFI) threads the bilayer. At 175–182 (PSAARVHY) the chain is on the vesicular side. Residues 183–203 (GCVMCVRILQGLVEGVTYPAC) traverse the membrane as a helical segment. Over 204 to 221 (HGMWSKWAPPLERSRLAT) the chain is Cytoplasmic. Residues 222–242 (TSFCGSYAGAVVAMPLAGVLV) form a helical membrane-spanning segment. Residues 243–249 (QYIGWAS) are Vesicular-facing. The helical transmembrane segment at 250 to 270 (VFYIYGMFGIIWYMFWLLQAY) threads the bilayer. The Cytoplasmic segment spans residues 271–314 (ECPAVHPTISNEERTYIETSIGEGANLASLSKFNTPWRRFFTSL). The helical transmembrane segment at 315 to 335 (PVYAIIVANFCRSWTFYLLLI) threads the bilayer. The Vesicular segment spans residues 336-353 (SQPAYFEEVFGFAISKVG). Residues 354-374 (LLSAVPHMVMTIVVPIGGQLA) traverse the membrane as a helical segment. Residues 375-390 (DYLRSRKILTTTAVRK) are Cytoplasmic-facing. A helical membrane pass occupies residues 391–411 (IMNCGGFGMEATLLLVVGFSH). Residues 412–413 (TK) are Vesicular-facing. A helical transmembrane segment spans residues 414–434 (GVAISFLVLAVGFSGFAISGF). Residues 435–447 (NVNHLDIAPRYAS) lie on the Cytoplasmic side of the membrane. A helical transmembrane segment spans residues 448 to 468 (ILMGISNGVGTLSGMVCPLIV). The Vesicular portion of the chain corresponds to 469 to 481 (GAMTKHKTREEWQ). The chain crosses the membrane as a helical span at residues 482–502 (NVFLIAALVHYSGVIFYGVFA). Over 503 to 585 (SGEKQDWADP…LSYQNEEDFS (83 aa)) the chain is Cytoplasmic. The tract at residues 539 to 588 (FVSPRKKMSYGATTQNCEVQKTDRRQQRESAFEGEEPLSYQNEEDFSETS) is disordered. The span at 558-569 (QKTDRRQQRESA) shows a compositional bias: basic and acidic residues. Acidic residues predominate over residues 570–588 (FEGEEPLSYQNEEDFSETS).

It belongs to the major facilitator superfamily. Sodium/anion cotransporter family. VGLUT subfamily. In terms of tissue distribution, expressed in brain, kidney and liver. Expressed within the amygdala, brainstem, cerberal cortex, dorsal root ganglia, dorsal spinal cord, hippocampus, hypothalamus, retina, striatum and ventral spinal cord. Expressed within neurons of the caudate-putamen, olfactory tubercle, nucleus accumbens, hippocampus, interpeduncular nucleus and dorsal and medial raphe nuclei. Expressed in inner hair cells of the ear. Expressed at synaptic terminals within the lateral superior olive (LSO), a nucleus of the mammalian sound localization system, and in the medial nucleus of the trapezoid body (MNTB), which provides inhibitory input to the LSO.

The protein localises to the cytoplasmic vesicle. The protein resides in the secretory vesicle. It localises to the synaptic vesicle membrane. It is found in the cell membrane. Its subcellular location is the synapse. The protein localises to the synaptosome. The enzyme catalyses L-glutamate(out) = L-glutamate(in). The catalysed reaction is chloride(in) = chloride(out). It carries out the reaction 3 Na(+)(out) + phosphate(out) = 3 Na(+)(in) + phosphate(in). The L-glutamate uniporter activity exhibits a biphasic dependence on chloride concentration. Chloride channel activity is allosterically activated by lumenal H(+) and Cl(-) leading to synaptic vesicles acidification. The glutamate transport activity is allosterically activated by lumenal H(+) and Cl(-), preventing non-vesicular L-glutamate release. In terms of biological role, multifunctional transporter that transports L-glutamate as well as multiple ions such as chloride, sodium and phosphate. At the synaptic vesicle membrane, mainly functions as an uniporter that mediates the uptake of L-glutamate into synaptic vesicles at presynaptic nerve terminals of excitatory neural cells. The L-glutamate uniporter activity is electrogenic and is driven by the proton electrochemical gradient, mainly by the electrical gradient established by the vacuolar H(+)-ATPase across the synaptic vesicle membrane. In addition, functions as a chloride channel that allows a chloride permeation through the synaptic vesicle membrane that affects the proton electrochemical gradient and promotes synaptic vesicles acidification. At the plasma membrane, following exocytosis, functions as a symporter of Na(+) and phosphate from the extracellular space to the cytoplasm allowing synaptic phosphate homeostasis regulation. The symporter activity is electrogenic. Moreover, operates synergistically with SLC18A3/VACHT under a constant H(+) gradient, thereby allowing striatal vesicular acetylcholine uptake. The polypeptide is Vesicular glutamate transporter 3 (Rattus norvegicus (Rat)).